Reading from the N-terminus, the 224-residue chain is MTQFKLIGFDLDGTLVNSLPDLALSVNSAFAEFDLPQAPEDLVLTWIGNGADILIARALAWAKAQTGKTLNDEQIKALKRRFGFYYGENLCNLSVLYPNVKSTLETLKQKGYLLAVVTNKPTKHVQPVLQAFGIDHLFSELLGGQSLPAIKPHPAPLYYLCGKFGLYPKQVLFVGDSKNDILAAHTAGCAVVGLTYGYNYNIPIAESKPDWVFDDFAQILTILE.

D10 functions as the Nucleophile in the catalytic mechanism. Mg(2+) is bound by residues D10, D12, and D176.

The protein belongs to the HAD-like hydrolase superfamily. CbbY/CbbZ/Gph/YieH family. The cofactor is Mg(2+).

It carries out the reaction 2-phosphoglycolate + H2O = glycolate + phosphate. It participates in organic acid metabolism; glycolate biosynthesis; glycolate from 2-phosphoglycolate: step 1/1. Its function is as follows. Specifically catalyzes the dephosphorylation of 2-phosphoglycolate. Is involved in the dissimilation of the intracellular 2-phosphoglycolate formed during the DNA repair of 3'-phosphoglycolate ends, a major class of DNA lesions induced by oxidative stress. The protein is Phosphoglycolate phosphatase of Pasteurella multocida (strain Pm70).